Consider the following 796-residue polypeptide: Quinoprotein glucose dehydrogenase (796 aa).

The Cytoplasmic portion of the chain corresponds to 1–10 (MAINNTGSRR). The chain crosses the membrane as a helical span at residues 11–37 (LLVTLTALFAALCGLYLLIGGGWLVAI). The Periplasmic portion of the chain corresponds to 38–40 (GGS). Residues 41 to 58 (WYYPIAGLVMLGVAWMLW) traverse the membrane as a helical segment. Topologically, residues 59-62 (RSKR) are cytoplasmic. The chain crosses the membrane as a helical span at residues 63–81 (AALWLYAALLLGTMIWGVW). At 82-95 (EVGFDFWALTPRSD) the chain is on the periplasmic side. Residues 96-110 (ILVFFGIWLILPFVW) form a helical membrane-spanning segment. The Cytoplasmic portion of the chain corresponds to 111 to 118 (RRLVIPAS). A helical transmembrane segment spans residues 119–141 (GAVAALVVALLISGGILTWAGFN). At 142–796 (DPQEINGTLS…VAYALPDDVK (655 aa)) the chain is on the periplasmic side. The active-site Proton acceptor is the aspartate 466.

The protein belongs to the bacterial PQQ dehydrogenase family. Monomer. The cofactor is pyrroloquinoline quinone.

The protein localises to the cell inner membrane. The enzyme catalyses a ubiquinone + D-glucose = D-glucono-1,5-lactone + a ubiquinol. Functionally, GDH is probably involved in energy conservation rather than in sugar metabolism. This is Quinoprotein glucose dehydrogenase (gcd) from Escherichia coli (strain K12).